The sequence spans 644 residues: Probable potassium transport system protein Kup (644 aa).

Helical transmembrane passes span 10–30 (GGAT…GDIG), 56–76 (ILSL…AWVI), 106–126 (WWIL…GVIT), 143–163 (PAWK…LFMV), 175–195 (FGPS…TWIV), 212–232 (FFGI…LAVT), 252–272 (AWYF…GALL), 282–302 (PFFM…SGIA), 343–363 (IYLP…ILWF), 371–391 (FAYG…VFFV), 403–423 (AGLF…ANLL), and 425–445 (FVEG…TMST).

It belongs to the HAK/KUP transporter (TC 2.A.72) family.

Its subcellular location is the cell inner membrane. The enzyme catalyses K(+)(in) + H(+)(in) = K(+)(out) + H(+)(out). Transport of potassium into the cell. Likely operates as a K(+):H(+) symporter. The sequence is that of Probable potassium transport system protein Kup from Acidithiobacillus ferrooxidans (strain ATCC 23270 / DSM 14882 / CIP 104768 / NCIMB 8455) (Ferrobacillus ferrooxidans (strain ATCC 23270)).